Reading from the N-terminus, the 217-residue chain is Large ribosomal subunit protein uL4 (217 aa).

The interval 42-100 (RAAARQGTHSTKTRGDVSGGGRKPYRQKGTGRARQGSTRAPQFTGGGVVHGPKPRDYSQ) is disordered.

It belongs to the universal ribosomal protein uL4 family. As to quaternary structure, part of the 50S ribosomal subunit.

One of the primary rRNA binding proteins, this protein initially binds near the 5'-end of the 23S rRNA. It is important during the early stages of 50S assembly. It makes multiple contacts with different domains of the 23S rRNA in the assembled 50S subunit and ribosome. Its function is as follows. Forms part of the polypeptide exit tunnel. The protein is Large ribosomal subunit protein uL4 of Mycobacterium avium (strain 104).